The sequence spans 121 residues: Small ribosomal subunit protein uS13 (121 aa).

Positions 93–121 (RGLPVRGQNTKNNARTRKGPRRTVANKKK) are disordered. Residues 106-121 (ARTRKGPRRTVANKKK) show a composition bias toward basic residues.

This sequence belongs to the universal ribosomal protein uS13 family. Part of the 30S ribosomal subunit. Forms a loose heterodimer with protein S19. Forms two bridges to the 50S subunit in the 70S ribosome.

In terms of biological role, located at the top of the head of the 30S subunit, it contacts several helices of the 16S rRNA. In the 70S ribosome it contacts the 23S rRNA (bridge B1a) and protein L5 of the 50S subunit (bridge B1b), connecting the 2 subunits; these bridges are implicated in subunit movement. Contacts the tRNAs in the A and P-sites. The protein is Small ribosomal subunit protein uS13 of Bacillus pumilus (strain SAFR-032).